A 390-amino-acid polypeptide reads, in one-letter code: uncharacterized protein (390 aa).

The next 12 helical transmembrane spans lie at 4–24 (IWLF…LSPL), 40–60 (GWMV…AGPI), 68–88 (TVML…GIAP), 98–118 (FAAG…IPVI), 130–150 (IATA…GFLA), 159–179 (FVLS…MPGI), 205–225 (VILL…SFLG), 236–256 (VSQI…GSLI), 273–293 (GMLL…LFLV), 295–315 (AGFF…MGVF), 329–349 (LSNA…GFLY), and 356–376 (GAVT…YQTI).

This sequence belongs to the major facilitator superfamily.

It localises to the cell membrane. This is an uncharacterized protein from Bacillus subtilis (strain 168).